The chain runs to 238 residues: Pyridoxine 5'-phosphate synthase (238 aa).

Asn-9 lines the 3-amino-2-oxopropyl phosphate pocket. 1-deoxy-D-xylulose 5-phosphate is bound at residue 11 to 12 (DH). A 3-amino-2-oxopropyl phosphate-binding site is contributed by Arg-20. Residue His-45 is the Proton acceptor of the active site. Positions 47 and 52 each coordinate 1-deoxy-D-xylulose 5-phosphate. The active-site Proton acceptor is Glu-72. Thr-102 serves as a coordination point for 1-deoxy-D-xylulose 5-phosphate. His-189 (proton donor) is an active-site residue. Residues Gly-190 and 211 to 212 (GH) contribute to the 3-amino-2-oxopropyl phosphate site.

Belongs to the PNP synthase family. Homooctamer; tetramer of dimers.

The protein resides in the cytoplasm. It carries out the reaction 3-amino-2-oxopropyl phosphate + 1-deoxy-D-xylulose 5-phosphate = pyridoxine 5'-phosphate + phosphate + 2 H2O + H(+). Its pathway is cofactor biosynthesis; pyridoxine 5'-phosphate biosynthesis; pyridoxine 5'-phosphate from D-erythrose 4-phosphate: step 5/5. In terms of biological role, catalyzes the complicated ring closure reaction between the two acyclic compounds 1-deoxy-D-xylulose-5-phosphate (DXP) and 3-amino-2-oxopropyl phosphate (1-amino-acetone-3-phosphate or AAP) to form pyridoxine 5'-phosphate (PNP) and inorganic phosphate. This is Pyridoxine 5'-phosphate synthase from Ehrlichia ruminantium (strain Welgevonden).